The following is a 445-amino-acid chain: Elongation factor 1-alpha (445 aa).

A tr-type G domain is found at 5-230; that stretch reads KVHISLVVIG…DNLEPPKRPS (226 aa). Residues 14 to 21 form a G1 region; the sequence is GHVDSGKS. Residue 14 to 21 coordinates GTP; the sequence is GHVDSGKS. Lysine 55 is modified (N6,N6-dimethyllysine). The tract at residues 70 to 74 is G2; it reads CITID. Lysine 79 is subject to N6,N6,N6-trimethyllysine. Residues 91 to 94 are G3; it reads DAPG. GTP-binding positions include 91–95 and 153–156; these read DAPGH and NKFD. The interval 153–156 is G4; it reads NKFD. Residue lysine 187 is modified to N6,N6,N6-trimethyllysine. The G5 stretch occupies residues 194–196; that stretch reads SGW. Lysine 261 carries the post-translational modification N6-methyllysine. N6,N6,N6-trimethyllysine is present on residues lysine 306 and lysine 396.

The protein belongs to the TRAFAC class translation factor GTPase superfamily. Classic translation factor GTPase family. EF-Tu/EF-1A subfamily.

It is found in the cytoplasm. This protein promotes the GTP-dependent binding of aminoacyl-tRNA to the A-site of ribosomes during protein biosynthesis. This chain is Elongation factor 1-alpha (TEF), found in Euglena gracilis.